The following is a 251-amino-acid chain: Pyruvate formate-lyase-activating enzyme (251 aa).

One can recognise a Radical SAM core domain in the interval 15–244 (VDGPGLRYIL…KAAYRYVNFK (230 aa)). The [4Fe-4S] cluster site is built by C29, C33, and C36. Residues 35 to 37 (YCH), G79, 134 to 136 (DIK), and H207 each bind S-adenosyl-L-methionine.

This sequence belongs to the organic radical-activating enzymes family. [4Fe-4S] cluster serves as cofactor.

The protein localises to the cytoplasm. The enzyme catalyses glycyl-[formate C-acetyltransferase] + reduced [flavodoxin] + S-adenosyl-L-methionine = glycin-2-yl radical-[formate C-acetyltransferase] + semiquinone [flavodoxin] + 5'-deoxyadenosine + L-methionine + H(+). Functionally, activation of pyruvate formate-lyase under anaerobic conditions by generation of an organic free radical, using S-adenosylmethionine and reduced flavodoxin as cosubstrates to produce 5'-deoxy-adenosine. This Staphylococcus aureus (strain N315) protein is Pyruvate formate-lyase-activating enzyme (pflA).